The sequence spans 355 residues: UDP-3-O-acylglucosamine N-acyltransferase (355 aa).

H258 serves as the catalytic Proton acceptor.

It belongs to the transferase hexapeptide repeat family. LpxD subfamily. As to quaternary structure, homotrimer.

It carries out the reaction a UDP-3-O-[(3R)-3-hydroxyacyl]-alpha-D-glucosamine + a (3R)-hydroxyacyl-[ACP] = a UDP-2-N,3-O-bis[(3R)-3-hydroxyacyl]-alpha-D-glucosamine + holo-[ACP] + H(+). The protein operates within bacterial outer membrane biogenesis; LPS lipid A biosynthesis. Its function is as follows. Catalyzes the N-acylation of UDP-3-O-acylglucosamine using 3-hydroxyacyl-ACP as the acyl donor. Is involved in the biosynthesis of lipid A, a phosphorylated glycolipid that anchors the lipopolysaccharide to the outer membrane of the cell. This is UDP-3-O-acylglucosamine N-acyltransferase from Agrobacterium fabrum (strain C58 / ATCC 33970) (Agrobacterium tumefaciens (strain C58)).